The primary structure comprises 261 residues: Pyrroline-5-carboxylate reductase (261 aa).

This sequence belongs to the pyrroline-5-carboxylate reductase family.

It localises to the cytoplasm. It carries out the reaction L-proline + NADP(+) = (S)-1-pyrroline-5-carboxylate + NADPH + 2 H(+). The enzyme catalyses L-proline + NAD(+) = (S)-1-pyrroline-5-carboxylate + NADH + 2 H(+). The protein operates within amino-acid biosynthesis; L-proline biosynthesis; L-proline from L-glutamate 5-semialdehyde: step 1/1. Its function is as follows. Catalyzes the reduction of 1-pyrroline-5-carboxylate (PCA) to L-proline. In Thermus thermophilus (strain ATCC BAA-163 / DSM 7039 / HB27), this protein is Pyrroline-5-carboxylate reductase.